Reading from the N-terminus, the 89-residue chain is Large ribosomal subunit protein bL27 (89 aa).

Belongs to the bacterial ribosomal protein bL27 family.

The sequence is that of Large ribosomal subunit protein bL27 from Bacteroides fragilis (strain ATCC 25285 / DSM 2151 / CCUG 4856 / JCM 11019 / LMG 10263 / NCTC 9343 / Onslow / VPI 2553 / EN-2).